A 1948-amino-acid polypeptide reads, in one-letter code: Chromodomain-helicase-DNA-binding protein 5 (1948 aa).

Disordered stretches follow at residues Met1–Leu136, Ser228–Lys268, and Ser281–Tyr336. Acidic residues-rich tracts occupy residues Glu17–Glu37 and Asn71–Gly89. 2 stretches are compositionally biased toward basic residues: residues Thr95 to Lys114 and Gly250 to Lys268. A compositionally biased stretch (acidic residues) spans Ser289–Leu299. The span at Lys319–Lys328 shows a compositional bias: basic residues. 2 PHD-type zinc fingers span residues Gln341 to Glu388 and Met414 to Pro461. A histone-binding region spans residues Gln341 to Ala651. Positions Met495–Phe552 constitute a Chromo 1 domain. The disordered stretch occupies residues Asp547–Lys569. Residues Glu559 to Lys569 show a composition bias toward basic and acidic residues. A Chromo 2 domain is found at Met590 to Ala651. Positions Arg710–Glu894 constitute a Helicase ATP-binding domain. Asp723–Thr730 is a binding site for ATP. The DEAH box motif lies at Asp845 to His848. In terms of domain architecture, Helicase C-terminal spans Leu1026–Leu1191. Disordered regions lie at residues Met1206–Ser1250, Tyr1349–Leu1409, Lys1521–Lys1566, and Thr1595–Asn1692. 2 stretches are compositionally biased toward acidic residues: residues Ser1353–Ser1364 and Ser1374–Glu1383. N5-methylglutamine is present on Gln1388. Residues Thr1547–Leu1561 show a composition bias toward pro residues. Phosphoserine is present on Ser1552. Basic and acidic residues-rich tracts occupy residues Asp1598–Lys1625, Pro1633–Glu1650, and Asn1657–Thr1672.

Belongs to the SNF2/RAD54 helicase family. In terms of assembly, component of the nucleosome remodeling and deacetylase (NuRD) repressor complex, composed of core proteins MTA1, MTA2, MTA3, RBBP4, RBBP7, HDAC1, HDAC2, MBD2, MBD3, and peripherally associated proteins CDK2AP1, CDK2AP2, GATAD2A, GATAD2B, CHD3, CHD4 and CHD5. The exact stoichiometry of the NuRD complex is unknown, and some subunits such as MBD2 and MBD3, GATAD2A and GATAD2B, and CHD3, CHD4 and CHD5 define mutually exclusive NuRD complexes. Interacts with HDAC2. Methylated at Gln-1388 by N6AMT1. As to expression, expressed in brain regions enriched in neurons and not in regions rich in glial cells (at protein level).

The protein localises to the nucleus. The protein resides in the chromosome. The catalysed reaction is ATP + H2O = ADP + phosphate + H(+). ATP-dependent chromatin-remodeling factor that binds DNA through histones and regulates gene transcription. May specifically recognize and bind trimethylated 'Lys-27' (H3K27me3) and non-methylated 'Lys-4' of histone H3. Acts as a component of the histone deacetylase NuRD complex which participates in the remodeling of chromatin. Plays a role in the development of the nervous system by activating the expression of genes promoting neuron terminal differentiation. In parallel, it may also positively regulate the trimethylation of histone H3 at 'Lys-27' thereby specifically repressing genes that promote the differentiation into non-neuronal cell lineages. Regulates the expression of genes involved in cell proliferation and differentiation. Downstream activated genes may include CDKN2A that positively regulates the p53/TP53 pathway, which in turn, prevents cell proliferation. In spermatogenesis, it probably regulates histone hyperacetylation and the replacement of histones by transition proteins in chromatin, a crucial step in the condensation of spermatid chromatin and the production of functional spermatozoa. In Rattus norvegicus (Rat), this protein is Chromodomain-helicase-DNA-binding protein 5 (Chd5).